A 629-amino-acid polypeptide reads, in one-letter code: MQYHEQFDVIVVGGGHAGTEAATAAARMGLNTLLLTHNIDTLGHMSCNPAIGGIGKGHLVKEVDALGGIMARATDLAGIQFRTLNSSKGPAVRATRAQADRLLYKAVVRQMLENYPNLKIFQQACDDLIMDGDRVAGVVTQSGIRISGKTVVLTVGTFLNGLIHIGMENYKGGRAGDPPSIALAQRLREMPLRIDRLKTGTPPRIDARSVDLSVMQAQYGDDPRPVFSFIGDASQHPRQVPCYVTHTNERTHDVIRNNLDRSPMYAGVIEGIGPRYCPSIEDKITRFADKTAHQIFVEPEGLTTHELYPNGISTSLPFDVQVQIVRSIRGFENAHITRPGYAIEYDFFDPRDLKANMESKYIGNLFFAGQINGTTGYEEAAAQGLMAGLNAGLRAQDKDPWHPRRDQAYMGVMIDDLSTLGTREPYRMFTSRAEYRLLLREDNADLRLTAIGRELGLVDDERWGKFNIKMEQVELERQRMRSTWIHPQHPSLEAVNALVNTPLTREQNLEELLRRPEVTYDALMAIEGVGPALSDHAAADQVEIQIKYAGYIERQYDEVEKQLRNENTLLPLDMNYRDVNGLSNEVIAKLNDAKPETIGQASRISGITPAAISILLVHLKKHGLLRKTA.

An FAD-binding site is contributed by 13-18 (GGGHAG). Residue 273-287 (GPRYCPSIEDKITRF) participates in NAD(+) binding.

Belongs to the MnmG family. In terms of assembly, homodimer. Heterotetramer of two MnmE and two MnmG subunits. It depends on FAD as a cofactor.

The protein resides in the cytoplasm. Its function is as follows. NAD-binding protein involved in the addition of a carboxymethylaminomethyl (cmnm) group at the wobble position (U34) of certain tRNAs, forming tRNA-cmnm(5)s(2)U34. This is tRNA uridine 5-carboxymethylaminomethyl modification enzyme MnmG from Aeromonas salmonicida (strain A449).